Consider the following 433-residue polypeptide: Mannan endo-1,4-beta-mannosidase 2 (433 aa).

A signal peptide spans 1–28 (MAAPTGNGPVIPILGFLTCVAFIYLSFG). Asn-46 carries an N-linked (GlcNAc...) asparagine glycan. Position 98 (Trp-98) interacts with substrate. Asn-169 is a glycosylation site (N-linked (GlcNAc...) asparagine). Residue Asn-214 coordinates substrate. Glu-215 acts as the Proton donor in catalysis. Substrate is bound at residue Tyr-295. Glu-335 acts as the Nucleophile in catalysis. Trp-377 is a binding site for substrate.

It belongs to the glycosyl hydrolase 5 (cellulase A) family. As to expression, expressed in roots, stems, leaves and seeds.

The protein localises to the secreted. The enzyme catalyses Random hydrolysis of (1-&gt;4)-beta-D-mannosidic linkages in mannans, galactomannans and glucomannans.. The protein is Mannan endo-1,4-beta-mannosidase 2 (MAN2) of Arabidopsis thaliana (Mouse-ear cress).